Reading from the N-terminus, the 117-residue chain is Protein Wnt-6 (117 aa).

A lipid anchor (O-palmitoleoyl serine; by PORCN) is attached at S1. C83 and C98 are oxidised to a cystine. The N-linked (GlcNAc...) asparagine glycan is linked to N84.

Belongs to the Wnt family. Palmitoleoylation is required for efficient binding to frizzled receptors. Depalmitoleoylation leads to Wnt signaling pathway inhibition.

The protein localises to the secreted. It is found in the extracellular space. It localises to the extracellular matrix. Its function is as follows. Ligand for members of the frizzled family of seven transmembrane receptors. Probable developmental protein. May be a signaling molecule which affects the development of discrete regions of tissues. Is likely to signal over only few cell diameters. In Strongylocentrotus purpuratus (Purple sea urchin), this protein is Protein Wnt-6 (WNT-6).